Here is a 346-residue protein sequence, read N- to C-terminus: Low specificity L-threonine aldolase (346 aa).

Lysine 207 carries the post-translational modification N6-(pyridoxal phosphate)lysine.

Belongs to the threonine aldolase family. As to quaternary structure, homotetramer. Pyridoxal 5'-phosphate is required as a cofactor.

It carries out the reaction L-threonine = acetaldehyde + glycine. The catalysed reaction is L-allo-threonine = acetaldehyde + glycine. Its function is as follows. Catalyzes the cleavage of L-allo-threonine and L-threonine to glycine and acetaldehyde. In Pseudomonas aeruginosa (strain ATCC 15692 / DSM 22644 / CIP 104116 / JCM 14847 / LMG 12228 / 1C / PRS 101 / PAO1), this protein is Low specificity L-threonine aldolase (ltaE).